The sequence spans 394 residues: Alpha-2B adrenergic receptor (394 aa).

A helical transmembrane segment spans residues 1-25 (AIAAVITFLILFTIFGNALVILAVL). Residues 26–36 (TSRSLRAPQNL) are Cytoplasmic-facing. A helical membrane pass occupies residues 37 to 62 (FLVSLAAADILVATLIIPFSLANELL). The Extracellular segment spans residues 63–72 (GYWYFRRTWC). A disulfide bond links Cys-72 and Cys-151. Residues 73-95 (EVYLALDVLFCTSSIVHLCAISL) form a helical membrane-spanning segment. Topologically, residues 96–117 (DRYWAVSRALEYNCKRTPRRIK) are cytoplasmic. Residues 118–140 (CIILTVWLIAAAISLPPLIYKGD) form a helical membrane-spanning segment. Topologically, residues 141–156 (QGPQPHGAPQCKLNQE) are extracellular. The helical transmembrane segment at 157-180 (AWYILSSSLGSFFVPCLIMILVYL) threads the bilayer. Residues 181–358 (RIYLIAKRSH…LSREKRFTFV (178 aa)) lie on the Cytoplasmic side of the membrane. Positions 191–318 (RRGPRAKGGP…GSPPLQQPQG (128 aa)) are disordered. Over residues 281–298 (LEEEAEEEEEEEEEEDEP) the composition is skewed to acidic residues. Residues 299 to 312 (QAVPVSPASVGSPP) are compositionally biased toward low complexity. The helical transmembrane segment at 359 to 382 (LAVVIGVFVLCWFPFFFSYSLSAI) threads the bilayer. Residues 383–391 (CPQQCRVPH) are Extracellular-facing. Residues 392 to 394 (GLF) form a helical membrane-spanning segment.

It belongs to the G-protein coupled receptor 1 family. Adrenergic receptor subfamily. ADRA2B sub-subfamily. Interacts with RAB26. Interacts with PPP1R9B. Interacts with GGA1, GGA2 and GGA3.

Its subcellular location is the cell membrane. Functionally, alpha-2 adrenergic receptors mediate the catecholamine-induced inhibition of adenylate cyclase through the action of G proteins. This is Alpha-2B adrenergic receptor (ADRA2B) from Oryctolagus cuniculus (Rabbit).